The following is a 325-amino-acid chain: Cell division protein ZipA (325 aa).

Residues 1-5 are Periplasmic-facing; it reads MQELR. The helical transmembrane segment at 6-26 threads the bilayer; it reads LVLILVGALAIAALLFHGLWT. At 27 to 325 the chain is on the cytoplasmic side; sequence SRKETSSKFG…KQRVKVFCRK (299 aa).

It belongs to the ZipA family. In terms of assembly, interacts with FtsZ via their C-terminal domains.

The protein resides in the cell inner membrane. Functionally, essential cell division protein that stabilizes the FtsZ protofilaments by cross-linking them and that serves as a cytoplasmic membrane anchor for the Z ring. Also required for the recruitment to the septal ring of downstream cell division proteins. The polypeptide is Cell division protein ZipA (Aliivibrio fischeri (strain MJ11) (Vibrio fischeri)).